Reading from the N-terminus, the 435-residue chain is Methylenetetrahydrofolate--tRNA-(uracil-5-)-methyltransferase TrmFO (435 aa).

Position 7-12 (7-12 (GAGLAG)) interacts with FAD.

This sequence belongs to the MnmG family. TrmFO subfamily. The cofactor is FAD.

It localises to the cytoplasm. The catalysed reaction is uridine(54) in tRNA + (6R)-5,10-methylene-5,6,7,8-tetrahydrofolate + NADH + H(+) = 5-methyluridine(54) in tRNA + (6S)-5,6,7,8-tetrahydrofolate + NAD(+). It catalyses the reaction uridine(54) in tRNA + (6R)-5,10-methylene-5,6,7,8-tetrahydrofolate + NADPH + H(+) = 5-methyluridine(54) in tRNA + (6S)-5,6,7,8-tetrahydrofolate + NADP(+). In terms of biological role, catalyzes the folate-dependent formation of 5-methyl-uridine at position 54 (M-5-U54) in all tRNAs. The sequence is that of Methylenetetrahydrofolate--tRNA-(uracil-5-)-methyltransferase TrmFO from Thermotoga sp. (strain RQ2).